Reading from the N-terminus, the 336-residue chain is Acetaldehyde dehydrogenase 1 (336 aa).

32–35 (SGVV) provides a ligand contact to NAD(+). Cys150 acts as the Acyl-thioester intermediate in catalysis. Asn309 contacts NAD(+).

Belongs to the acetaldehyde dehydrogenase family.

It carries out the reaction acetaldehyde + NAD(+) + CoA = acetyl-CoA + NADH + H(+). The chain is Acetaldehyde dehydrogenase 1 (mhpF) from Mycobacterium ulcerans (strain Agy99).